The sequence spans 435 residues: Nucleoredoxin (435 aa).

Ser2 carries the post-translational modification N-acetylserine. Residues Pro167 to Ala321 enclose the Thioredoxin domain.

The protein belongs to the nucleoredoxin family. Associates with the phosphatase 2A holoenzyme. Interacts with PPP2CA; the interaction is direct. Interacts with DVL1 (via PDZ domain); the interaction is direct and regulated by oxidative stress.

It is found in the cytoplasm. The protein localises to the cytosol. It localises to the nucleus. It catalyses the reaction [protein]-dithiol + NAD(+) = [protein]-disulfide + NADH + H(+). The enzyme catalyses [protein]-dithiol + NADP(+) = [protein]-disulfide + NADPH + H(+). In terms of biological role, functions as a redox-dependent negative regulator of the Wnt signaling pathway, possibly by preventing ubiquitination of DVL3 by the BCR(KLHL12) complex. May also function as a transcriptional regulator act as a regulator of protein phosphatase 2A (PP2A). In Homo sapiens (Human), this protein is Nucleoredoxin (NXN).